Reading from the N-terminus, the 62-residue chain is Large ribosomal subunit protein bL28 (62 aa).

This sequence belongs to the bacterial ribosomal protein bL28 family.

The sequence is that of Large ribosomal subunit protein bL28 from Koribacter versatilis (strain Ellin345).